Consider the following 252-residue polypeptide: MVSNTIRVAVGILGNAASMLLYAAPILTFRRVIKKGSVEEFSCVPYILALFNCLLYTWYGLPVVSSGWENSTVSSINGLGILLEIAFISIYTWFAPRERKKFVLRMVLPVLAFFALTAIFSSFLFHTHGLRKVFVGSIGLVASISMYSSPMVAAKQVITTKSVEFMPFYLSLFSFLSSALWMIYGLLGKDLFIASPNFIGCPMGILQLVLYCIYRKSHKEAEKLHDIDQENGLKVVTTHEKITGREPEAQRD.

Residues 1–8 (MVSNTIRV) are Extracellular-facing. A helical transmembrane segment spans residues 9–29 (AVGILGNAASMLLYAAPILTF). The region spanning 10-98 (VGILGNAASM…SIYTWFAPRE (89 aa)) is the MtN3/slv 1 domain. Over 30–43 (RRVIKKGSVEEFSC) the chain is Cytoplasmic. Residues 44–64 (VPYILALFNCLLYTWYGLPVV) form a helical membrane-spanning segment. At 65 to 75 (SSGWENSTVSS) the chain is on the extracellular side. N-linked (GlcNAc...) asparagine glycosylation occurs at Asn-70. Residues 76-96 (INGLGILLEIAFISIYTWFAP) form a helical membrane-spanning segment. The Cytoplasmic portion of the chain corresponds to 97–105 (RERKKFVLR). The helical transmembrane segment at 106-126 (MVLPVLAFFALTAIFSSFLFH) threads the bilayer. The Extracellular segment spans residues 127 to 132 (THGLRK). Residues 133 to 153 (VFVGSIGLVASISMYSSPMVA) form a helical membrane-spanning segment. One can recognise a MtN3/slv 2 domain in the interval 134 to 219 (FVGSIGLVAS…LYCIYRKSHK (86 aa)). The Cytoplasmic portion of the chain corresponds to 154–167 (AKQVITTKSVEFMP). A helical transmembrane segment spans residues 168–188 (FYLSLFSFLSSALWMIYGLLG). Residues 189-190 (KD) lie on the Extracellular side of the membrane. A helical transmembrane segment spans residues 191–211 (LFIASPNFIGCPMGILQLVLY). The Cytoplasmic portion of the chain corresponds to 212–252 (CIYRKSHKEAEKLHDIDQENGLKVVTTHEKITGREPEAQRD).

It belongs to the SWEET sugar transporter family. Forms homooligomers and/or heterooligomers.

It is found in the cell membrane. Functionally, mediates both low-affinity uptake and efflux of sugar across the plasma membrane. The sequence is that of Bidirectional sugar transporter SWEET3b (SWEET3B) from Oryza sativa subsp. japonica (Rice).